Consider the following 97-residue polypeptide: NADH dehydrogenase [ubiquinone] 1 alpha subcomplex subunit 2 (97 aa).

A disulfide bond links Cys19 and Cys53.

This sequence belongs to the complex I NDUFA2 subunit family. In terms of assembly, complex I is composed of at least 49 different subunits.

It is found in the mitochondrion inner membrane. Functionally, accessory subunit of the mitochondrial membrane respiratory chain NADH dehydrogenase (Complex I), that is believed not to be involved in catalysis. Complex I functions in the transfer of electrons from NADH to the respiratory chain. The immediate electron acceptor for the enzyme is believed to be ubiquinone. This is NADH dehydrogenase [ubiquinone] 1 alpha subcomplex subunit 2 from Arabidopsis thaliana (Mouse-ear cress).